The sequence spans 459 residues: DNA primase large subunit (459 aa).

[4Fe-4S] cluster contacts are provided by Cys291, Cys369, Cys386, and Cys428.

This sequence belongs to the eukaryotic-type primase large subunit family. As to quaternary structure, heterodimer of a catalytic subunit spp1/pri1 and a regulatory subunit spp2/pri2, also known as the DNA primase complex. Component of the alpha DNA polymerase complex (also known as the alpha DNA polymerase-primase complex) consisting of four subunits: the catalytic subunit pol1, the accessory subunit spb70/pol12, and the primase complex subunits spp1/pri1 and spp2/pri2 respectively. Interacts with orc2; preferentially associates with the unphosphorylated orc2 in G1 pre-Start prior to orc2 being phosphorylated by cdc2, the interaction is mediated by spb70 and might enable the association of the whole alpha DNA polymerase complex to orc2/spb70 complex on chromatin. The cofactor is [4Fe-4S] cluster.

The protein localises to the nucleus. It is found in the chromosome. In terms of biological role, regulatory subunit of the DNA primase complex and component of the DNA polymerase alpha complex (also known as the alpha DNA polymerase-primase complex - primosome/replisome) which play an essential role in the initiation of DNA synthesis. During the S phase of the cell cycle, the DNA polymerase alpha complex (composed of a catalytic subunit pol1, an accessory subunit spb70/pol12 and two primase subunits, the catalytic subunit spp1/pri1 and the regulatory subunit spp2/pri2) is recruited to DNA at the replicative forks. The primase subunit of the polymerase alpha complex initiates DNA synthesis by oligomerising short RNA primers on both leading and lagging strands. The protein is DNA primase large subunit of Schizosaccharomyces pombe (strain 972 / ATCC 24843) (Fission yeast).